Here is a 450-residue protein sequence, read N- to C-terminus: Putative MYST-like histone acetyltransferase 1 (450 aa).

The region spanning leucine 63 to leucine 122 is the Tudor-knot domain. One can recognise an MYST-type HAT domain in the interval threonine 174 to proline 445. Residues leucine 207–leucine 232 form a C2HC MYST-type zinc finger. An N6-acetyllysine; by autocatalysis modification is found at lysine 274. Acetyl-CoA is bound by residues isoleucine 317–threonine 319 and glutamine 324–lysine 330. The active-site Proton donor/acceptor is the glutamate 350. Acetyl-CoA is bound at residue serine 354.

It belongs to the MYST (SAS/MOZ) family. Autoacetylation at Lys-274 is required for proper function.

It is found in the nucleus. The enzyme catalyses L-lysyl-[protein] + acetyl-CoA = N(6)-acetyl-L-lysyl-[protein] + CoA + H(+). Functionally, histone acetyltransferase which may be involved in transcriptional activation. In Oryza sativa subsp. japonica (Rice), this protein is Putative MYST-like histone acetyltransferase 1.